Consider the following 344-residue polypeptide: Nuclear distribution protein nudE-like 1-B (344 aa).

A coiled-coil region spans residues 13–190; the sequence is KEEIVYWREL…LAVRERQTDG (178 aa). 2 disordered regions span residues 186 to 209 and 325 to 344; these read RQTD…TDSS and PPGV…PLSV. Residues 333–344 are compositionally biased toward pro residues; sequence PPSPPGLLPLSV.

The protein belongs to the nudE family. Post-translationally, phosphorylated in mitosis.

Its subcellular location is the cytoplasm. The protein resides in the cytoskeleton. It localises to the microtubule organizing center. It is found in the centrosome. The protein localises to the spindle. Its function is as follows. Required for organization of the cellular microtubule array and microtubule anchoring at the centrosome. Positively regulates the activity of the minus-end directed microtubule motor protein dynein. May enhance dynein-mediated microtubule sliding by targeting dynein to the microtubule plus end. Positively regulates lysosome peripheral distribution and ruffled border formation in osteoclasts. The sequence is that of Nuclear distribution protein nudE-like 1-B (ndel1-b) from Xenopus laevis (African clawed frog).